Consider the following 433-residue polypeptide: Xylose isomerase (433 aa).

Catalysis depends on residues H99 and D102. Residues E230, E266, H269, D294, D305, D307, and D337 each contribute to the Mg(2+) site.

The protein belongs to the xylose isomerase family. In terms of assembly, homotetramer. Mg(2+) is required as a cofactor.

The protein resides in the cytoplasm. The catalysed reaction is alpha-D-xylose = alpha-D-xylulofuranose. The polypeptide is Xylose isomerase (Cereibacter sphaeroides (strain ATCC 17023 / DSM 158 / JCM 6121 / CCUG 31486 / LMG 2827 / NBRC 12203 / NCIMB 8253 / ATH 2.4.1.) (Rhodobacter sphaeroides)).